A 226-amino-acid polypeptide reads, in one-letter code: 2-C-methyl-D-erythritol 4-phosphate cytidylyltransferase (226 aa).

This sequence belongs to the IspD/TarI cytidylyltransferase family. IspD subfamily.

The catalysed reaction is 2-C-methyl-D-erythritol 4-phosphate + CTP + H(+) = 4-CDP-2-C-methyl-D-erythritol + diphosphate. It participates in isoprenoid biosynthesis; isopentenyl diphosphate biosynthesis via DXP pathway; isopentenyl diphosphate from 1-deoxy-D-xylulose 5-phosphate: step 2/6. Its function is as follows. Catalyzes the formation of 4-diphosphocytidyl-2-C-methyl-D-erythritol from CTP and 2-C-methyl-D-erythritol 4-phosphate (MEP). The protein is 2-C-methyl-D-erythritol 4-phosphate cytidylyltransferase of Actinobacillus pleuropneumoniae serotype 7 (strain AP76).